We begin with the raw amino-acid sequence, 85 residues long: Large ribosomal subunit protein bL27 (85 aa).

The disordered stretch occupies residues 1–20; it reads MATKKAGGSTRNGRDSEAKR.

It belongs to the bacterial ribosomal protein bL27 family.

The chain is Large ribosomal subunit protein bL27 from Haemophilus influenzae (strain PittEE).